The chain runs to 248 residues: Glutaredoxin domain-containing cysteine-rich protein 2 (248 aa).

2 stretches are compositionally biased toward basic and acidic residues: residues 1 to 16 and 157 to 172; these read MEDP…DGKP and LMNK…QHDR. Disordered regions lie at residues 1–20 and 150–172; these read MEDP…RKVR and EEAE…QHDR.

The protein belongs to the GRXCR2 family. As to quaternary structure, interacts with TPRN; the interaction restricts TPRN to the stereocilum basal region.

The protein localises to the cell projection. It localises to the stereocilium. In terms of biological role, required for hearing. Plays a role in maintaining cochlear stereocilia bundles that are involved in sound detection. Ensures the restriction of TPRN to the basal region of stereocilia in hair cells. This chain is Glutaredoxin domain-containing cysteine-rich protein 2 (GRXCR2), found in Homo sapiens (Human).